Here is a 131-residue protein sequence, read N- to C-terminus: Neo-calmodulin (131 aa).

EF-hand domains are found at residues 1 to 32 (EFKE…LGQN), 33 to 68 (PTEA…KMKD), 70 to 105 (DSEE…LGEK), and 106 to 131 (LTDE…YEEF). Ca(2+) is bound by residues Asp-10, Asp-12, Asp-14, Thr-16, Glu-21, Asp-46, Asp-48, Asn-50, Thr-52, Glu-57, Asp-83, Asp-85, Asn-87, Tyr-89, Glu-94, Asp-119, Asp-121, Asp-123, Gln-125, and Glu-130.

This sequence belongs to the calmodulin family.

This Gallus gallus (Chicken) protein is Neo-calmodulin.